The primary structure comprises 268 residues: Ribosomal RNA small subunit methyltransferase A (268 aa).

Residues asparagine 12, leucine 14, glycine 38, glutamate 59, aspartate 82, and asparagine 107 each coordinate S-adenosyl-L-methionine.

This sequence belongs to the class I-like SAM-binding methyltransferase superfamily. rRNA adenine N(6)-methyltransferase family. RsmA subfamily.

It localises to the cytoplasm. It carries out the reaction adenosine(1518)/adenosine(1519) in 16S rRNA + 4 S-adenosyl-L-methionine = N(6)-dimethyladenosine(1518)/N(6)-dimethyladenosine(1519) in 16S rRNA + 4 S-adenosyl-L-homocysteine + 4 H(+). In terms of biological role, specifically dimethylates two adjacent adenosines (A1518 and A1519) in the loop of a conserved hairpin near the 3'-end of 16S rRNA in the 30S particle. May play a critical role in biogenesis of 30S subunits. The protein is Ribosomal RNA small subunit methyltransferase A of Onion yellows phytoplasma (strain OY-M).